We begin with the raw amino-acid sequence, 20 residues long: Antimicrobial peptide EP-20 (20 aa).

Residues 1-20 (EGPVGLADPDGPASAPLGAP) form a disordered region.

It localises to the secreted. Functionally, the synthetic peptide inhibits growth of fungus P.capsici and partially that of V.dahliae, F.graminearum and F.omysporum. The polypeptide is Antimicrobial peptide EP-20 (Xenorhabdus budapestensis).